We begin with the raw amino-acid sequence, 265 residues long: Cytochrome c oxidase subunit 3 (265 aa).

6 consecutive transmembrane segments (helical) span residues 16–36 (PWPFFVAISANGMAVGLILWL), 40–60 (PSFLLMGMSLVCMLLSTFSWW), 83–103 (CVALFILSEVMFFFTFFWTFF), 159–179 (VGPFIGLVVTIVCGTVFFLVQ), 198–218 (VFYLLTGFHGMHVVVGTIWLM), and 241–261 (IWYWHFVDVVWVALWCLVYVW).

It belongs to the cytochrome c oxidase subunit 3 family. As to quaternary structure, component of the cytochrome c oxidase (complex IV, CIV), a multisubunit enzyme composed of a catalytic core of 3 subunits and several supernumerary subunits. The complex exists as a monomer or a dimer and forms supercomplexes (SCs) in the inner mitochondrial membrane with ubiquinol-cytochrome c oxidoreductase (cytochrome b-c1 complex, complex III, CIII).

It localises to the mitochondrion inner membrane. It catalyses the reaction 4 Fe(II)-[cytochrome c] + O2 + 8 H(+)(in) = 4 Fe(III)-[cytochrome c] + 2 H2O + 4 H(+)(out). Functionally, component of the cytochrome c oxidase, the last enzyme in the mitochondrial electron transport chain which drives oxidative phosphorylation. The respiratory chain contains 3 multisubunit complexes succinate dehydrogenase (complex II, CII), ubiquinol-cytochrome c oxidoreductase (cytochrome b-c1 complex, complex III, CIII) and cytochrome c oxidase (complex IV, CIV), that cooperate to transfer electrons derived from NADH and succinate to molecular oxygen, creating an electrochemical gradient over the inner membrane that drives transmembrane transport and the ATP synthase. Cytochrome c oxidase is the component of the respiratory chain that catalyzes the reduction of oxygen to water. Electrons originating from reduced cytochrome c in the intermembrane space (IMS) are transferred via the dinuclear copper A center (CU(A)) of subunit 2 and heme A of subunit 1 to the active site in subunit 1, a binuclear center (BNC) formed by heme A3 and copper B (CU(B)). The BNC reduces molecular oxygen to 2 water molecules using 4 electrons from cytochrome c in the IMS and 4 protons from the mitochondrial matrix. This Mytilus edulis (Blue mussel) protein is Cytochrome c oxidase subunit 3 (COIII).